Here is a 177-residue protein sequence, read N- to C-terminus: Large ribosomal subunit protein uL6 (177 aa).

Belongs to the universal ribosomal protein uL6 family. As to quaternary structure, part of the 50S ribosomal subunit.

Its function is as follows. This protein binds to the 23S rRNA, and is important in its secondary structure. It is located near the subunit interface in the base of the L7/L12 stalk, and near the tRNA binding site of the peptidyltransferase center. In Methylococcus capsulatus (strain ATCC 33009 / NCIMB 11132 / Bath), this protein is Large ribosomal subunit protein uL6.